Reading from the N-terminus, the 115-residue chain is T cell receptor beta variable 7-8 (115 aa).

Residues Met1–Ala21 form the signal peptide. Residues Gly22 to Leu115 form the Ig-like domain. A disulfide bond links Cys42 and Cys111.

As to quaternary structure, alpha-beta TR is a heterodimer composed of an alpha and beta chain; disulfide-linked. The alpha-beta TR is associated with the transmembrane signaling CD3 coreceptor proteins to form the TR-CD3 (TcR or TCR). The assembly of alpha-beta TR heterodimers with CD3 occurs in the endoplasmic reticulum where a single alpha-beta TR heterodimer associates with one CD3D-CD3E heterodimer, one CD3G-CD3E heterodimer and one CD247 homodimer forming a stable octameric structure. CD3D-CD3E and CD3G-CD3E heterodimers preferentially associate with TR alpha and TR beta chains, respectively. The association of the CD247 homodimer is the last step of TcR assembly in the endoplasmic reticulum and is required for transport to the cell surface.

It localises to the cell membrane. Its function is as follows. V region of the variable domain of T cell receptor (TR) beta chain that participates in the antigen recognition. Alpha-beta T cell receptors are antigen specific receptors which are essential to the immune response and are present on the cell surface of T lymphocytes. Recognize peptide-major histocompatibility (MH) (pMH) complexes that are displayed by antigen presenting cells (APC), a prerequisite for efficient T cell adaptive immunity against pathogens. Binding of alpha-beta TR to pMH complex initiates TR-CD3 clustering on the cell surface and intracellular activation of LCK that phosphorylates the ITAM motifs of CD3G, CD3D, CD3E and CD247 enabling the recruitment of ZAP70. In turn ZAP70 phosphorylates LAT, which recruits numerous signaling molecules to form the LAT signalosome. The LAT signalosome propagates signal branching to three major signaling pathways, the calcium, the mitogen-activated protein kinase (MAPK) kinase and the nuclear factor NF-kappa-B (NF-kB) pathways, leading to the mobilization of transcription factors that are critical for gene expression and essential for T cell growth and differentiation. The T cell repertoire is generated in the thymus, by V-(D)-J rearrangement. This repertoire is then shaped by intrathymic selection events to generate a peripheral T cell pool of self-MH restricted, non-autoaggressive T cells. Post-thymic interaction of alpha-beta TR with the pMH complexes shapes TR structural and functional avidity. The protein is T cell receptor beta variable 7-8 of Homo sapiens (Human).